A 170-amino-acid chain; its full sequence is Probable calcium-binding protein CML29 (170 aa).

EF-hand domains are found at residues 27-62, 63-98, and 138-170; these read SYISSLVEAFQAFDSDNDGLVTAPELRGLLASLGLD, KPEHEVRDMLARADADRDGKLSVEELLDVMNAGQLG, and ASVEDCMEIIACMDGDGDGAISVEEFRLMAQLL. Ca(2+) is bound by residues aspartate 40, aspartate 42, aspartate 44, glutamate 51, aspartate 76, aspartate 78, aspartate 80, lysine 82, glutamate 87, aspartate 151, aspartate 153, aspartate 155, and glutamate 162.

Potential calcium sensor. In Oryza sativa subsp. japonica (Rice), this protein is Probable calcium-binding protein CML29 (CML29).